Consider the following 507-residue polypeptide: Maturase K (507 aa).

It belongs to the intron maturase 2 family. MatK subfamily.

The protein resides in the plastid. The protein localises to the chloroplast. Its function is as follows. Usually encoded in the trnK tRNA gene intron. Probably assists in splicing its own and other chloroplast group II introns. The protein is Maturase K of Ranunculus macranthus (Large buttercup).